Reading from the N-terminus, the 475-residue chain is Mitochondrial adenyl nucleotide antiporter SLC25A24 (475 aa).

The segment at 1 to 173 (MLRWLRGFVL…RFWKHSTGID (173 aa)) is regulatory N-terminal domain. Residues 1–197 (MLRWLRGFVL…ERKSGQWWRQ (197 aa)) are Mitochondrial intermembrane-facing. 4 consecutive EF-hand domains span residues 19–54 (EPPTRYETLFQALDRNGDGVVDIRELQEGLKSLGIP), 55–88 (LGQDAEEKIFTTGDVNKDGKLDFEEFMKYLKDHE), 86–121 (DHEKKMKLAFKSLDKNNDGKIEASEIVQSLQTLGLT), and 122–157 (ISEQQAELILQSIDADGTMTVDWNEWRDYFLFNPVA). The Ca(2+) site is built by Asp-32, Asn-34, Asp-36, Val-38, Glu-43, Asp-68, Asn-70, Asp-72, Lys-74, Glu-79, Asp-99, Asn-101, Asp-103, Lys-105, Glu-110, Asp-135, Asp-137, Thr-139, Thr-141, and Glu-146. The interval 159 to 168 (IEEIIRFWKH) is linker region. Positions 174 to 475 (IGDSLTIPDE…MKQTLGVTQK (302 aa)) are C-terminal transmembrane transporter domain. 3 Solcar repeats span residues 192–276 (GQWW…YKKL), 284–369 (IGTF…LKSH), and 381–469 (PGVL…MKQT). A helical transmembrane segment spans residues 198-215 (LLAGGIAGAVSRTSTAPL). Topologically, residues 216-250 (DRLKVMMQVHGSKSMNIFGGFRQMIKEGGVRSLWR) are mitochondrial matrix. A helical transmembrane segment spans residues 251–270 (GNGTNVIKIAPETAVKFWVY). Residues 271 to 293 (EQYKKLLTEEGQKIGTFERFISG) lie on the Mitochondrial intermembrane side of the membrane. Residues 294–307 (SMAGATAQTFIYPM) traverse the membrane as a helical segment. At 308–343 (EVMKTRLAVGKTGQYSGIYDCAKKILKYEGFGAFYK) the chain is on the mitochondrial matrix side. The residue at position 318 (Lys-318) is an N6-acetyllysine; alternate. Lys-318 carries the post-translational modification N6-succinyllysine; alternate. An N6-acetyllysine modification is found at Lys-334. Residues 344–363 (GYVPNLLGIIPYAGIDLAVY) form a helical membrane-spanning segment. Over 364–386 (ELLKSHWLDNFAKDSVNPGVLVL) the chain is Mitochondrial intermembrane. The chain crosses the membrane as a helical span at residues 387–404 (LGCGALSSTCGQLASYPL). The Mitochondrial matrix segment spans residues 405–443 (ALVRTRMQAQAMLEGAPQLNMVGLFRRIISKEGLPGLYR). N6-acetyllysine; alternate is present on Lys-435. At Lys-435 the chain carries N6-succinyllysine; alternate. The chain crosses the membrane as a helical span at residues 444–463 (GITPNFMKVLPAVGISYVVY). The Mitochondrial intermembrane portion of the chain corresponds to 464-475 (ENMKQTLGVTQK).

The protein belongs to the mitochondrial carrier (TC 2.A.29) family. In terms of assembly, monomer. Mainly expressed in colon. Also expressed in the small intestine proximal to the ileum. Weakly expressed in kidney but not in the liver.

It is found in the mitochondrion inner membrane. It localises to the peroxisome membrane. The catalysed reaction is Mg(2+)(out) + phosphate(in) + ATP(out) = Mg(2+)(in) + phosphate(out) + ATP(in). The enzyme catalyses ADP(out) + phosphate(in) + H(+)(out) = ADP(in) + phosphate(out) + H(+)(in). It carries out the reaction AMP(out) + phosphate(in) = AMP(in) + phosphate(out). It catalyses the reaction phosphate(in) + ATP(out) + 2 H(+)(out) = phosphate(out) + ATP(in) + 2 H(+)(in). The catalysed reaction is dADP(in) + ADP(out) = dADP(out) + ADP(in). The enzyme catalyses Mg(2+)(in) + ADP(out) + ATP(in) + H(+)(out) = Mg(2+)(out) + ADP(in) + ATP(out) + H(+)(in). It carries out the reaction ADP(out) + diphosphate(in) = ADP(in) + diphosphate(out). It catalyses the reaction dAMP(in) + ADP(out) + H(+)(out) = dAMP(out) + ADP(in) + H(+)(in). The catalysed reaction is 3'-AMP(in) + ADP(out) + H(+)(out) = 3'-AMP(out) + ADP(in) + H(+)(in). The enzyme catalyses dAMP(out) + phosphate(in) = dAMP(in) + phosphate(out). It carries out the reaction 3'-AMP(out) + phosphate(in) = 3'-AMP(in) + phosphate(out). It catalyses the reaction dADP(out) + phosphate(in) + H(+)(out) = dADP(in) + phosphate(out) + H(+)(in). With respect to regulation, activated by an increase in cytosolic calcium levels that induce a conformational change of the N-terminal regulatory domain, uncapping the channel and allowing transport. Inhibited by bathophenanthroline, mersalyl, p-hydroxymercuribenzoate, bromcresol purple and tannic acid. Functionally, electroneutral antiporter that mediates the transport of adenyl nucleotides through the inner mitochondrial membrane. Originally identified as an ATP-magnesium/inorganic phosphate antiporter, it also acts as a broad specificity adenyl nucleotide antiporter. By regulating the mitochondrial matrix adenyl nucleotide pool could adapt to changing cellular energetic demands and indirectly regulate adenyl nucleotide-dependent metabolic pathways. In vitro, a low activity is also observed with guanyl and pyrimidine nucleotides. May play a role in protecting cells against oxidative stress-induced cell death, by buffering calcium levels in the mitochondrial matrix through the formation of calcium-phosphate precipitates. The polypeptide is Mitochondrial adenyl nucleotide antiporter SLC25A24 (SLC25A24) (Oryctolagus cuniculus (Rabbit)).